The chain runs to 150 residues: D-aminoacyl-tRNA deacylase (150 aa).

Residues 137-138 (GP) carry the Gly-cisPro motif, important for rejection of L-amino acids motif.

This sequence belongs to the DTD family. Homodimer.

Its subcellular location is the cytoplasm. It carries out the reaction glycyl-tRNA(Ala) + H2O = tRNA(Ala) + glycine + H(+). It catalyses the reaction a D-aminoacyl-tRNA + H2O = a tRNA + a D-alpha-amino acid + H(+). Its function is as follows. An aminoacyl-tRNA editing enzyme that deacylates mischarged D-aminoacyl-tRNAs. Also deacylates mischarged glycyl-tRNA(Ala), protecting cells against glycine mischarging by AlaRS. Acts via tRNA-based rather than protein-based catalysis; rejects L-amino acids rather than detecting D-amino acids in the active site. By recycling D-aminoacyl-tRNA to D-amino acids and free tRNA molecules, this enzyme counteracts the toxicity associated with the formation of D-aminoacyl-tRNA entities in vivo and helps enforce protein L-homochirality. The chain is D-aminoacyl-tRNA deacylase from Alkalilimnicola ehrlichii (strain ATCC BAA-1101 / DSM 17681 / MLHE-1).